The primary structure comprises 680 residues: DNA ligase (680 aa).

NAD(+) contacts are provided by residues 35-39 (DADFD), 86-87 (SL), and glutamate 111. The active-site N6-AMP-lysine intermediate is lysine 113. Residues arginine 134, glutamate 174, lysine 290, and lysine 314 each coordinate NAD(+). Zn(2+)-binding residues include cysteine 408, cysteine 411, cysteine 427, and cysteine 433. A BRCT domain is found at 597–680 (VAEQTLEGLT…RLLNTGSADE (84 aa)).

This sequence belongs to the NAD-dependent DNA ligase family. LigA subfamily. Requires Mg(2+) as cofactor. The cofactor is Mn(2+).

It carries out the reaction NAD(+) + (deoxyribonucleotide)n-3'-hydroxyl + 5'-phospho-(deoxyribonucleotide)m = (deoxyribonucleotide)n+m + AMP + beta-nicotinamide D-nucleotide.. Functionally, DNA ligase that catalyzes the formation of phosphodiester linkages between 5'-phosphoryl and 3'-hydroxyl groups in double-stranded DNA using NAD as a coenzyme and as the energy source for the reaction. It is essential for DNA replication and repair of damaged DNA. This chain is DNA ligase, found in Corynebacterium glutamicum (strain R).